The chain runs to 1522 residues: Dicer-like protein 1 (1522 aa).

A compositionally biased stretch (acidic residues) spans Met-1–Asp-12. Residues Met-1–Glu-37 form a disordered region. The region spanning Leu-76–Leu-258 is the Helicase ATP-binding domain. Leu-89 to Thr-96 provides a ligand contact to ATP. Positions Asp-202–His-205 match the DEAH box motif. Residues Trp-408–Ile-576 enclose the Helicase C-terminal domain. Residues Ser-600–Ala-700 form the Dicer dsRNA-binding fold domain. The 122-residue stretch at Pro-859 to Asn-980 folds into the PAZ domain. 2 consecutive RNase III domains span residues Ile-995–His-1166 and Ala-1222–Glu-1373. Mg(2+) contacts are provided by Glu-1262, Asp-1359, and Glu-1362. Residues Thr-1409 to Gly-1478 form the DRBM domain. Residues Cys-1421, His-1449, Cys-1490, and Cys-1492 each contribute to the Zn(2+) site.

It belongs to the helicase family. Dicer subfamily. The cofactor is Mg(2+). Requires Mn(2+) as cofactor.

Its function is as follows. Dicer-like endonuclease involved in cleaving double-stranded RNA in the RNA interference (RNAi) pathway. Produces 21 to 25 bp dsRNAs (siRNAs) which target the selective destruction of homologous RNAs leading to sequence-specific suppression of gene expression, called post-transcriptional gene silencing (PTGS). Part of a broad host defense response against viral infection and transposons. This Phaeosphaeria nodorum (strain SN15 / ATCC MYA-4574 / FGSC 10173) (Glume blotch fungus) protein is Dicer-like protein 1 (DCL1).